The chain runs to 628 residues: (+)-alpha pinene synthase 1, chloroplastic (628 aa).

A chloroplast-targeting transit peptide spans methionine 1–threonine 18. Positions 379, 383, and 531 each coordinate Mg(2+). Positions aspartate 379–aspartate 383 match the DDXXD motif motif.

The protein belongs to the terpene synthase family. Tpsd subfamily. Requires Mg(2+) as cofactor. Mn(2+) is required as a cofactor.

It is found in the plastid. The protein resides in the chloroplast. It catalyses the reaction (2E)-geranyl diphosphate = (1R,5R)-alpha-pinene + diphosphate. It functions in the pathway terpene metabolism; oleoresin biosynthesis. It participates in secondary metabolite biosynthesis; terpenoid biosynthesis. In terms of biological role, monoterpene synthase (TPS) involved in the biosynthesis of monoterpene natural products included in conifer oleoresin secretions and volatile emissions; these compounds contribute to biotic and abiotic stress defense against herbivores and pathogens. Catalyzes the conversion of (2E)-geranyl diphosphate (GPP) to (+)-alpha-pinene. This is (+)-alpha pinene synthase 1, chloroplastic from Pinus banksiana (Jack pine).